Here is a 237-residue protein sequence, read N- to C-terminus: Probable transcriptional regulatory protein Mfl546 (237 aa).

The tract at residues 1-20 is disordered; the sequence is MGRAHEVRAASMAKTAAKKS. The span at 9–20 shows a compositional bias: low complexity; sequence AASMAKTAAKKS.

It belongs to the TACO1 family.

The protein resides in the cytoplasm. This chain is Probable transcriptional regulatory protein Mfl546, found in Mesoplasma florum (strain ATCC 33453 / NBRC 100688 / NCTC 11704 / L1) (Acholeplasma florum).